Consider the following 293-residue polypeptide: MSAMGAGPDHLFNLRNNFYLGAYQTAINNSEIANLSPENAVERDCLVFRSYIALGSYQLVISEIDESAATPLQAVKLLAMYLSTPQNKESTISSLKEWLADSTIGNNDTLRLIAGIIFMHEEDYNETLKHTHAGGTMDLYALNVQIFIKMHRAEYAEKQLRVMQQIDEDHTLTQLASAWLNLAVGGSKIQEAYLIFEDFSEKYPMTCLILNGKAVCCMQMGNFDEAETLLLEALNKDAKDPETLANLVVCSLHVGKSSSRHLSQLKLSHPEHILVKRVSSAEDNFERAVQLVA.

This sequence belongs to the COPE family. As to quaternary structure, oligomeric complex that consists of at least the alpha, beta, beta', gamma, delta, epsilon and zeta subunits.

It is found in the cytoplasm. The protein resides in the golgi apparatus membrane. Its subcellular location is the cytoplasmic vesicle. It localises to the COPI-coated vesicle membrane. In terms of biological role, the coatomer is a cytosolic protein complex that binds to dilysine motifs and reversibly associates with Golgi non-clathrin-coated vesicles, which further mediate biosynthetic protein transport from the ER, via the Golgi up to the trans Golgi network. The coatomer complex is required for budding from Golgi membranes, and is essential for the retrograde Golgi-to-ER transport of dilysine-tagged proteins. This Arabidopsis thaliana (Mouse-ear cress) protein is Coatomer subunit epsilon-2.